We begin with the raw amino-acid sequence, 394 residues long: Small RNA 2'-O-methyltransferase (394 aa).

Residues Asp-78 and Ser-114 each contribute to the S-adenosyl-L-methionine site. Positions 132, 135, 136, and 181 each coordinate Mg(2+).

Belongs to the methyltransferase superfamily. HEN1 family. It depends on Mg(2+) as a cofactor.

It is found in the cytoplasm. It carries out the reaction small RNA 3'-end nucleotide + S-adenosyl-L-methionine = small RNA 3'-end 2'-O-methylnucleotide + S-adenosyl-L-homocysteine + H(+). In terms of biological role, methyltransferase that adds a 2'-O-methyl group at the 3'-end of piRNAs, a class of 24 to 30 nucleotide RNAs that are generated by a Dicer-independent mechanism and are primarily derived from transposons and other repeated sequence elements. This probably protects the 3'-end of piRNAs from uridylation activity and subsequent degradation. Stabilization of piRNAs is essential for gametogenesis. This is Small RNA 2'-O-methyltransferase (Henmt1) from Rattus norvegicus (Rat).